The chain runs to 252 residues: MQLTRCCFVFLVQGSLYLVICGQDDGPPGSEDPEHDDHEGQPRPRVPRKRGHISPKSRPLANSTLLGLLAPPGEVWGVLGQPPNRPKQSPLPSTKVKKIFGWGDFYSNIKTVALNLLVTGKIVDHGNGTFSVHFRHNATGQGNISISLVPPSKAVEFHQEQQIFIEAKASKIFNCRMEWEKVERGRRTSLCTHDPAKICSRDHAQSSATWSCSQPFKVVCVYIAFYSTDYRLVQKVCPDYNYHSDTPYYPSG.

The N-terminal stretch at 1–22 is a signal peptide; sequence MQLTRCCFVFLVQGSLYLVICG. Residues 23–75 are II; it reads QDDGPPGSEDPEHDDHEGQPRPRVPRKRGHISPKSRPLANSTLLGLLAPPGEV. The segment at 27 to 59 is disordered; that stretch reads PPGSEDPEHDDHEGQPRPRVPRKRGHISPKSRP. Over residues 45–55 the composition is skewed to basic residues; sequence RVPRKRGHISP. N-linked (GlcNAc...) asparagine glycans are attached at residues asparagine 62, asparagine 127, asparagine 137, and asparagine 143. An III region spans residues 76–157; the sequence is WGVLGQPPNR…LVPPSKAVEF (82 aa). The IV (linker domain) stretch occupies residues 158–166; the sequence is HQEQQIFIE. Positions 167–252 are v (Cys-rich); it reads AKASKIFNCR…HSDTPYYPSG (86 aa).

This sequence belongs to the neurexophilin family. In terms of processing, may be proteolytically processed at the boundary between the N-terminal non-conserved and the central conserved domain in neuron-like cells. In terms of tissue distribution, highest level in brain, present also in lung, kidney and testis.

It is found in the secreted. Functionally, may be signaling molecules that resemble neuropeptides. Ligand for alpha-neurexins. This Mus musculus (Mouse) protein is Neurexophilin-3 (Nxph3).